Consider the following 332-residue polypeptide: Glycerol-3-phosphate dehydrogenase [NAD(P)+] 2 (332 aa).

Residues serine 17, tryptophan 18, arginine 37, and lysine 112 each coordinate NADPH. Lysine 112 and glycine 140 together coordinate sn-glycerol 3-phosphate. NADPH is bound at residue alanine 144. The sn-glycerol 3-phosphate site is built by lysine 195, aspartate 243, serine 253, arginine 254, and asparagine 255. Catalysis depends on lysine 195, which acts as the Proton acceptor. Arginine 254 provides a ligand contact to NADPH. Residues valine 278 and glutamate 280 each contribute to the NADPH site.

Belongs to the NAD-dependent glycerol-3-phosphate dehydrogenase family.

It localises to the cytoplasm. The catalysed reaction is sn-glycerol 3-phosphate + NAD(+) = dihydroxyacetone phosphate + NADH + H(+). The enzyme catalyses sn-glycerol 3-phosphate + NADP(+) = dihydroxyacetone phosphate + NADPH + H(+). Its pathway is membrane lipid metabolism; glycerophospholipid metabolism. Functionally, catalyzes the reduction of the glycolytic intermediate dihydroxyacetone phosphate (DHAP) to sn-glycerol 3-phosphate (G3P), the key precursor for phospholipid synthesis. The chain is Glycerol-3-phosphate dehydrogenase [NAD(P)+] 2 from Mycolicibacterium paratuberculosis (strain ATCC BAA-968 / K-10) (Mycobacterium paratuberculosis).